The following is a 252-amino-acid chain: Putative hydro-lyase OB3382 (252 aa).

Belongs to the D-glutamate cyclase family.

In Oceanobacillus iheyensis (strain DSM 14371 / CIP 107618 / JCM 11309 / KCTC 3954 / HTE831), this protein is Putative hydro-lyase OB3382.